Reading from the N-terminus, the 209-residue chain is Octanoyltransferase (209 aa).

Positions 28-203 constitute a BPL/LPL catalytic domain; that stretch reads NATPETLLLL…RFQGLLDEWL (176 aa). Substrate is bound by residues 66–73, 133–135, and 146–148; these read RGGDVTFH, AIG, and GFA. The active-site Acyl-thioester intermediate is the Cys-164.

The protein belongs to the LipB family.

The protein localises to the cytoplasm. The catalysed reaction is octanoyl-[ACP] + L-lysyl-[protein] = N(6)-octanoyl-L-lysyl-[protein] + holo-[ACP] + H(+). Its pathway is protein modification; protein lipoylation via endogenous pathway; protein N(6)-(lipoyl)lysine from octanoyl-[acyl-carrier-protein]: step 1/2. Its function is as follows. Catalyzes the transfer of endogenously produced octanoic acid from octanoyl-acyl-carrier-protein onto the lipoyl domains of lipoate-dependent enzymes. Lipoyl-ACP can also act as a substrate although octanoyl-ACP is likely to be the physiological substrate. The chain is Octanoyltransferase from Pelobacter propionicus (strain DSM 2379 / NBRC 103807 / OttBd1).